The sequence spans 785 residues: Mitochondrial intermediate peptidase (785 aa).

A mitochondrion-targeting transit peptide spans 1–27 (MLKAVMPRPWVCSRCVKRQIQSSRGLA). Residues 26 to 52 (LATASTQYREPRPVPTDHSAPGAKHDD) are disordered. His-566 contacts Zn(2+). Glu-567 is a catalytic residue. Residues His-570 and His-573 each contribute to the Zn(2+) site.

The protein belongs to the peptidase M3 family. Zn(2+) serves as cofactor.

The protein localises to the mitochondrion matrix. The enzyme catalyses Release of an N-terminal octapeptide as second stage of processing of some proteins imported into the mitochondrion.. Its function is as follows. Cleaves proteins, imported into the mitochondrion, to their mature size. While most mitochondrial precursor proteins are processed to the mature form in one step by mitochondrial processing peptidase (MPP), the sequential cleavage by MIP of an octapeptide after initial processing by MPP is a required step for a subgroup of nuclear-encoded precursor proteins destined for the matrix or the inner membrane. The polypeptide is Mitochondrial intermediate peptidase (oct1) (Sclerotinia sclerotiorum (strain ATCC 18683 / 1980 / Ss-1) (White mold)).